Consider the following 252-residue polypeptide: Adapter protein MecA (252 aa).

This sequence belongs to the MecA family. Homodimer.

Its function is as follows. Enables the recognition and targeting of unfolded and aggregated proteins to the ClpC protease or to other proteins involved in proteolysis. This Streptococcus uberis (strain ATCC BAA-854 / 0140J) protein is Adapter protein MecA.